Reading from the N-terminus, the 179-residue chain is MFPMVTGFMNYGQQTVRAARYIGQSFMITLSHANRLPVTIQYPYEKSITSERFRGRIHFEFDKCIACEVCVRVCPIDLPVVDWRLETDIRKKRLLNYSIDFGICIFCGNCVEYCPTNCLSMTEEYELSTYDRHELNYNQIALGRLPMSVIGDYTVRTIMNSTQIKISMDKPLDSRTITN.

4Fe-4S ferredoxin-type domains lie at 55–84 and 95–124; these read GRIH…VDWR and LNYS…MTEE. [4Fe-4S] cluster-binding residues include cysteine 64, cysteine 67, cysteine 70, cysteine 74, cysteine 104, cysteine 107, cysteine 110, and cysteine 114.

It belongs to the complex I 23 kDa subunit family. In terms of assembly, NDH is composed of at least 16 different subunits, 5 of which are encoded in the nucleus. The cofactor is [4Fe-4S] cluster.

The protein localises to the plastid. The protein resides in the chloroplast thylakoid membrane. It catalyses the reaction a plastoquinone + NADH + (n+1) H(+)(in) = a plastoquinol + NAD(+) + n H(+)(out). It carries out the reaction a plastoquinone + NADPH + (n+1) H(+)(in) = a plastoquinol + NADP(+) + n H(+)(out). NDH shuttles electrons from NAD(P)H:plastoquinone, via FMN and iron-sulfur (Fe-S) centers, to quinones in the photosynthetic chain and possibly in a chloroplast respiratory chain. The immediate electron acceptor for the enzyme in this species is believed to be plastoquinone. Couples the redox reaction to proton translocation, and thus conserves the redox energy in a proton gradient. In Nymphaea alba (White water-lily), this protein is NAD(P)H-quinone oxidoreductase subunit I, chloroplastic.